We begin with the raw amino-acid sequence, 260 residues long: Kallikrein-8 (260 aa).

Positions 1-28 (MGRPRPRAAKTWMFLLLLGGAWAGHSRA) are cleaved as a signal peptide. Positions 29–32 (QEDK) are excised as a propeptide. Residues 33–257 (VLGGHECQPH…YLDWIKKIIG (225 aa)) enclose the Peptidase S1 domain. 6 disulfides stabilise this stretch: Cys-39/Cys-173, Cys-58/Cys-74, Cys-145/Cys-246, Cys-152/Cys-218, Cys-184/Cys-198, and Cys-208/Cys-233. His-73 serves as the catalytic Charge relay system. Asn-110 is a glycosylation site (N-linked (GlcNAc...) asparagine). Residue Asp-120 is the Charge relay system of the active site. The active-site Charge relay system is Ser-212.

It belongs to the peptidase S1 family. Kallikrein subfamily. As to quaternary structure, interacts with SPINK9. Isoform 1 is predominantly expressed in the pancreas. Isoform 2 is expressed in adult brain and hippocampus. Isoform 1 and isoform 2 are found in fetal brain and placenta. Detected in salivary gland, uterus, thymus, breast, testis and kidney but not in spleen, liver, lung or normal ovarian tissue. Displays an 11.5-fold increase in Alzheimer disease hippocampus compared to controls and is overexpressed in some ovarian carcinomas. Expressed at low levels in normal skin while high levels are found in psoriasis vulgaris, seborrheic keratosis, lichen planus and squamous cell carcinoma skin samples. Expressed in the keratinocytes.

It localises to the secreted. It is found in the cytoplasm. The enzyme catalyses Cleavage of amide substrates following the basic amino acids Arg or Lys at the P1 position, with a preference for Arg over Lys.. Its activity is regulated as follows. Inhibited by a range of serine protease inhibitors including antipain, aprotinin, leupeptin, benzamidine and soybean trypsin inhibitor. Its function is as follows. Serine protease which is capable of degrading a number of proteins such as casein, fibrinogen, kininogen, fibronectin and collagen type IV. Also cleaves L1CAM in response to increased neural activity. Induces neurite outgrowth and fasciculation of cultured hippocampal neurons. Plays a role in the formation and maturation of orphan and small synaptic boutons in the Schaffer-collateral pathway, regulates Schaffer-collateral long-term potentiation in the hippocampus and is required for memory acquisition and synaptic plasticity. Involved in skin desquamation and keratinocyte proliferation. Plays a role in the secondary phase of pathogenesis following spinal cord injury. In Homo sapiens (Human), this protein is Kallikrein-8 (KLK8).